Reading from the N-terminus, the 363-residue chain is 3,4-dihydroxy-2-butanone 4-phosphate synthase (363 aa).

The segment at 1-201 (MTLSTAQEII…VADLIEYRNK (201 aa)) is DHBP synthase. D-ribulose 5-phosphate contacts are provided by residues 27 to 28 (RE), Asp32, 140 to 144 (RAGHT), and Glu164. Glu28 lines the Mg(2+) pocket. A Mg(2+)-binding site is contributed by His143. Residues 202-363 (YETMIERISE…GLEIVEYVCS (162 aa)) form a GTP cyclohydrolase II-like region.

In the N-terminal section; belongs to the DHBP synthase family. It in the C-terminal section; belongs to the GTP cyclohydrolase II family. It depends on Mg(2+) as a cofactor. Mn(2+) serves as cofactor.

The catalysed reaction is D-ribulose 5-phosphate = (2S)-2-hydroxy-3-oxobutyl phosphate + formate + H(+). Its pathway is cofactor biosynthesis; riboflavin biosynthesis; 2-hydroxy-3-oxobutyl phosphate from D-ribulose 5-phosphate: step 1/1. Its function is as follows. Catalyzes the conversion of D-ribulose 5-phosphate to formate and 3,4-dihydroxy-2-butanone 4-phosphate. In Photobacterium phosphoreum, this protein is 3,4-dihydroxy-2-butanone 4-phosphate synthase (ribB).